The following is a 671-amino-acid chain: cGMP-dependent protein kinase 1 (671 aa).

The residue at position 2 (Ser-2) is an N-acetylserine. The stretch at 2 to 59 (SELEEDFAKILMLKEERIKELEKRLSEKEEEIQELKRKLHKCQSVLPVPSTHIGPRTT) forms a coiled coil. A required for dimerization region spans residues 2-102 (SELEEDFAKI…LIKEAILDND (101 aa)). Residues 9 to 44 (AKILMLKEERIKELEKRLSEKEEEIQELKRKLHKCQ) are leucine-zipper. The interval 50–75 (PSTHIGPRTTRAQGISAEPQTYRSFH) is autoinhibitory domain. Thr-59 carries the post-translational modification Phosphothreonine; by autocatalysis. Positions 103 to 220 (FMKNLELSQI…EYMEFLKSVP (118 aa)) are cGMP-binding, high affinity. 3',5'-cyclic AMP is bound by residues 167–170 (GELA) and 177–178 (RT). 3',5'-cyclic GMP-binding positions include 167–170 (GELA), 177–178 (RT), Arg-282, 291–294 (GEKA), 301–302 (RT), and Tyr-336. Residues 221–341 (TFQSLPEEIL…SNKAYEDAEA (121 aa)) are cGMP-binding, low affinity. 3',5'-cyclic AMP is bound by residues 291 to 294 (GEKA), 301 to 302 (RT), and Tyr-336. Positions 360–619 (FNIIDTLGVG…VKDIQKHKWF (260 aa)) constitute a Protein kinase domain. Residues 366 to 374 (LGVGGFGRV) and Lys-390 each bind ATP. The active-site Proton acceptor is the Asp-484. The residue at position 515 (Thr-515) is a Phosphothreonine. An AGC-kinase C-terminal domain is found at 620–671 (EGFNWEGLRKGTLTPPIIPSVASPTDTSNFDSFPEDNDEPPPDDNSGWDIDF). The interval 635-671 (PIIPSVASPTDTSNFDSFPEDNDEPPPDDNSGWDIDF) is disordered. The segment covering 652–661 (FPEDNDEPPP) has biased composition (acidic residues).

It belongs to the protein kinase superfamily. AGC Ser/Thr protein kinase family. cGMP subfamily. In terms of assembly, isoform alpha: parallel homodimer or heterodimer and also heterotetramer. Interacts directly with PPP1R12A. Non-covalent dimer of dimer of PRKG1-PRKG1 and PPP1R12A-PPP1R12A. This interaction targets PRKG1 to stress fibers to mediate smooth muscle cell relaxation and vasodilation in responses to rises in cGMP. Isoform beta: antiparallel homodimer. Part of cGMP kinase signaling complex at least composed of ACTA2/alpha-actin, CNN1/calponin H1, PLN/phospholamban, PRKG1 and ITPR1. Interacts with IRAG1. Forms a stable complex with ITPR1, IRAG1, and isoform beta of PRKG1. Interacts with TRPC7 (via ankyrin repeat domain). Isoform alpha interacts with RGS2. Interacts with GTF2I. Autophosphorylation increases kinase activity. Post-translationally, 65 kDa monomer is produced by proteolytic cleavage. In terms of tissue distribution, primarily expressed in lung and placenta.

The protein resides in the cytoplasm. The catalysed reaction is L-seryl-[protein] + ATP = O-phospho-L-seryl-[protein] + ADP + H(+). It carries out the reaction L-threonyl-[protein] + ATP = O-phospho-L-threonyl-[protein] + ADP + H(+). With respect to regulation, in the absence of cGMP, PRKG1 activity is suppressed by autoinhibitory contacts. Its function is as follows. Serine/threonine protein kinase that acts as a key mediator of the nitric oxide (NO)/cGMP signaling pathway. GMP binding activates PRKG1, which phosphorylates serines and threonines on many cellular proteins. Numerous protein targets for PRKG1 phosphorylation are implicated in modulating cellular calcium, but the contribution of each of these targets may vary substantially among cell types. Proteins that are phosphorylated by PRKG1 regulate platelet activation and adhesion, smooth muscle contraction, cardiac function, gene expression, feedback of the NO-signaling pathway, and other processes involved in several aspects of the CNS like axon guidance, hippocampal and cerebellar learning, circadian rhythm and nociception. Smooth muscle relaxation is mediated through lowering of intracellular free calcium, by desensitization of contractile proteins to calcium, and by decrease in the contractile state of smooth muscle or in platelet activation. Regulates intracellular calcium levels via several pathways: phosphorylates IRAG1 and inhibits IP3-induced Ca(2+) release from intracellular stores, phosphorylation of KCNMA1 (BKCa) channels decreases intracellular Ca(2+) levels, which leads to increased opening of this channel. PRKG1 phosphorylates the canonical transient receptor potential channel (TRPC) family which inactivates the associated inward calcium current. Another mode of action of NO/cGMP/PKGI signaling involves PKGI-mediated inactivation of the Ras homolog gene family member A (RhoA). Phosphorylation of RHOA by PRKG1 blocks the action of this protein in myriad processes: regulation of RHOA translocation; decreasing contraction; controlling vesicle trafficking, reduction of myosin light chain phosphorylation resulting in vasorelaxation. Activation of PRKG1 by NO signaling also alters gene expression in a number of tissues. In smooth muscle cells, increased cGMP and PRKG1 activity influence expression of smooth muscle-specific contractile proteins, levels of proteins in the NO/cGMP signaling pathway, down-regulation of the matrix proteins osteopontin and thrombospondin-1 to limit smooth muscle cell migration and phenotype. Regulates vasodilator-stimulated phosphoprotein (VASP) functions in platelets and smooth muscle. This is cGMP-dependent protein kinase 1 (PRKG1) from Homo sapiens (Human).